The following is a 304-amino-acid chain: Glycosyltransferase AglE (304 aa).

Belongs to the glycosyltransferase 2 family.

It localises to the cell membrane. Its pathway is cell surface structure biogenesis; S-layer biogenesis. Involved in the assembly of a N-linked pentasaccharide that decorates the S-layer glycoprotein and flagellins. Catalyzes the addition to the dolichol phosphate carrier of the hexuronic acid found at position 4 of the pentasaccharide. This chain is Glycosyltransferase AglE (aglE), found in Haloferax volcanii (strain ATCC 29605 / DSM 3757 / JCM 8879 / NBRC 14742 / NCIMB 2012 / VKM B-1768 / DS2) (Halobacterium volcanii).